Here is a 291-residue protein sequence, read N- to C-terminus: Elongation factor Ts (291 aa).

The tract at residues 80–83 is involved in Mg(2+) ion dislocation from EF-Tu; it reads TDFV.

Belongs to the EF-Ts family.

The protein localises to the cytoplasm. Associates with the EF-Tu.GDP complex and induces the exchange of GDP to GTP. It remains bound to the aminoacyl-tRNA.EF-Tu.GTP complex up to the GTP hydrolysis stage on the ribosome. The protein is Elongation factor Ts of Acinetobacter baylyi (strain ATCC 33305 / BD413 / ADP1).